Here is a 146-residue protein sequence, read N- to C-terminus: Glycosylation-dependent cell adhesion molecule 1 (146 aa).

The first 19 residues, 1 to 19 (MKFFTVLLFASLAATSLAA), serve as a signal peptide directing secretion. The segment at 25–112 (DELHLRTQPT…SAATSEGKLT (88 aa)) is disordered. Over residues 48–60 (ISKESTSSKDLSK) the composition is skewed to basic and acidic residues. Phosphoserine occurs at positions 54, 59, and 71. The segment covering 74 to 106 (NVGTESTKPQSQEAQDGLRSGSSQQEETTSAAT) has biased composition (polar residues).

Belongs to the PP3/GlyCAM-1 family. Extensively O-glycosylated. As to expression, lymph nodes. Associated with the lumenal surface of the high endothelial venules of peripheral lymph nodes.

The protein localises to the cell membrane. Its function is as follows. Adhesion molecule that accomplishes cell binding by presenting carbohydrate(s) to the lectin domain of L-selectin. The polypeptide is Glycosylation-dependent cell adhesion molecule 1 (Glycam1) (Rattus norvegicus (Rat)).